The chain runs to 118 residues: Autophagy-related protein 8 (118 aa).

Gly116 carries Phosphatidylethanolamine amidated glycine lipidation. The propeptide at 117-118 (EA) is removed in mature form.

The protein belongs to the ATG8 family. In terms of assembly, conjugation to phosphatidylethanolamine (PE) leads to homodimerization. Interacts with ATG1, ATG3, ATG4, ATG7 and ATG12. In terms of processing, the C-terminal Glu-117 and Ala-118 residues of ATG8 are removed by ATG4 to expose Gly-116 at the C-terminus. This Gly-116 forms then a thioester bond with the 'Cys-550' of ATG7 (E1-like activating enzyme) before being transferred to the 'Cys-244' of ATG3 (the specific E2 conjugating enzyme), in order to be finally amidated with phosphatidylethanolamine. This lipid modification anchors ATG8 to membranes and can be reversed by ATG4, releasing soluble ATG8.

Its subcellular location is the cytoplasmic vesicle. The protein localises to the cvt vesicle membrane. It is found in the autophagosome membrane. It localises to the vacuole membrane. Ubiquitin-like modifier involved in cytoplasm to vacuole transport (Cvt) vesicles and autophagosome formation. With ATG4, mediates the delivery of the vesicles and autophagosomes to the vacuole via the microtubule cytoskeleton. Required for selective autophagic degradation of the nucleus (nucleophagy) as well as for mitophagy which contributes to regulate mitochondrial quantity and quality by eliminating the mitochondria to a basal level to fulfill cellular energy requirements and preventing excess ROS production. Also participates in membrane fusion events that take place in the early secretory pathway. Also involved in endoplasmic reticulum-specific autophagic process and is essential for the survival of cells subjected to severe ER stress. The ATG8-PE conjugate mediates tethering between adjacent membranes and stimulates membrane hemifusion, leading to expansion of the autophagosomal membrane during autophagy. Moreover not only conjugation, but also subsequent ATG8-PE deconjugation is an important step required to facilitate multiple events during macroautophagy, and especially for efficient autophagosome biogenesis, the assembly of ATG9-containing tubulovesicular clusters into phagophores/autophagosomes, and for the disassembly of PAS-associated ATG components. Autophagy is required for proper vegetative growth, asexual/sexual reproduction, and full virulence. Autophagy is particularly involved in the biosynthesis of deoxynivalenol (DON), an important virulence determinant. This is Autophagy-related protein 8 from Gibberella zeae (strain ATCC MYA-4620 / CBS 123657 / FGSC 9075 / NRRL 31084 / PH-1) (Wheat head blight fungus).